A 2381-amino-acid polypeptide reads, in one-letter code: Protein Ycf2 (2381 aa).

Residue 1655-1662 (GPMETGRS) coordinates ATP.

It belongs to the Ycf2 family.

It is found in the plastid. The protein localises to the chloroplast stroma. Functionally, probable ATPase of unknown function. Its presence in a non-photosynthetic plant (Epifagus virginiana) and experiments in tobacco indicate that it has an essential function which is probably not related to photosynthesis. The protein is Protein Ycf2 of Angiopteris evecta (Mule's foot fern).